The primary structure comprises 80 residues: Raniseptin-5 (80 aa).

An N-terminal signal peptide occupies residues 1–22 (MAFLKKSLFLVLFLGIVSLSIC). Positions 23–49 (EEEKREGEEEEKQEEENEELSEEELRE) are excised as a propeptide.

It belongs to the frog skin active peptide (FSAP) family. Dermaseptin subfamily. Expressed by the skin glands.

Its subcellular location is the secreted. Functionally, has antibacterial activity. In Boana raniceps (Chaco tree frog), this protein is Raniseptin-5.